Reading from the N-terminus, the 257-residue chain is Large ribosomal subunit protein uL2 (257 aa).

Residues 207–231 form a disordered region; sequence VEHPFGGGNHQHIGKPSTIRRDAPA.

It belongs to the universal ribosomal protein uL2 family. As to quaternary structure, component of the large ribosomal subunit.

It is found in the cytoplasm. In terms of biological role, component of the large ribosomal subunit. The ribosome is a large ribonucleoprotein complex responsible for the synthesis of proteins in the cell. The chain is Large ribosomal subunit protein uL2 (rpl8) from Xenopus tropicalis (Western clawed frog).